Consider the following 254-residue polypeptide: Alcohol dehydrogenase (254 aa).

10-33 (FVAGLGGIGLDTSREIVKSGPKNL) contributes to the NAD(+) binding site. Residue serine 138 coordinates substrate. The Proton acceptor role is filled by tyrosine 151.

This sequence belongs to the short-chain dehydrogenases/reductases (SDR) family. In terms of assembly, homodimer.

The enzyme catalyses a primary alcohol + NAD(+) = an aldehyde + NADH + H(+). It carries out the reaction a secondary alcohol + NAD(+) = a ketone + NADH + H(+). This Drosophila mimica (Fruit fly) protein is Alcohol dehydrogenase (Adh).